The primary structure comprises 83 residues: Cytochrome b559 subunit alpha (83 aa).

Residues 21–35 (VIHSITIPSLFIAGW) traverse the membrane as a helical segment. Residue His-23 participates in heme binding.

The protein belongs to the PsbE/PsbF family. As to quaternary structure, heterodimer of an alpha subunit and a beta subunit. PSII is composed of 1 copy each of membrane proteins PsbA, PsbB, PsbC, PsbD, PsbE, PsbF, PsbH, PsbI, PsbJ, PsbK, PsbL, PsbM, PsbT, PsbX, PsbY, PsbZ, Psb30/Ycf12, at least 3 peripheral proteins of the oxygen-evolving complex and a large number of cofactors. It forms dimeric complexes. Requires heme b as cofactor.

It is found in the plastid. It localises to the chloroplast thylakoid membrane. This b-type cytochrome is tightly associated with the reaction center of photosystem II (PSII). PSII is a light-driven water:plastoquinone oxidoreductase that uses light energy to abstract electrons from H(2)O, generating O(2) and a proton gradient subsequently used for ATP formation. It consists of a core antenna complex that captures photons, and an electron transfer chain that converts photonic excitation into a charge separation. This is Cytochrome b559 subunit alpha from Pinus koraiensis (Korean pine).